The chain runs to 95 residues: Large ribosomal subunit protein uL23 (95 aa).

The protein belongs to the universal ribosomal protein uL23 family. In terms of assembly, part of the 50S ribosomal subunit. Contacts protein L29, and trigger factor when it is bound to the ribosome.

Its function is as follows. One of the early assembly proteins it binds 23S rRNA. One of the proteins that surrounds the polypeptide exit tunnel on the outside of the ribosome. Forms the main docking site for trigger factor binding to the ribosome. The protein is Large ribosomal subunit protein uL23 of Bacillus pumilus (strain SAFR-032).